Here is a 228-residue protein sequence, read N- to C-terminus: Ornithine decarboxylase antizyme 1 (228 aa).

The disordered stretch occupies residues 17-55; it reads REKEGDKPSATIHASRTMPLLSLHSRGGSSSESSRVSLH. A compositionally biased stretch (low complexity) spans 36–55; it reads LLSLHSRGGSSSESSRVSLH.

The protein belongs to the ODC antizyme family. In terms of assembly, interacts with ODC1 and thereby sterically blocks ODC homodimerization. Forms a ternary complex with PSMB4 and OAZ1 before PSMB4 is incorporated into the 20S proteasome. Interacts with AZIN2; this interaction disrupts the interaction between the antizyme and ODC1. Interacts with FAM171A1.

Functionally, ornithine decarboxylase (ODC) antizyme protein that negatively regulates ODC activity and intracellular polyamine biosynthesis and uptake in response to increased intracellular polyamine levels. Binds to ODC monomers, inhibiting the assembly of the functional ODC homodimer, and targets the monomers for ubiquitin-independent proteolytic destruction by the 26S proteasome. Triggers ODC degradation by inducing the exposure of a cryptic proteasome-interacting surface of ODC. Stabilizes AZIN2 by interfering with its ubiquitination. Also inhibits cellular uptake of polyamines by inactivating the polyamine uptake transporter. SMAD1/OAZ1/PSMB4 complex mediates the degradation of the CREBBP/EP300 repressor SNIP1. Involved in the translocation of AZIN2 from ER-Golgi intermediate compartment (ERGIC) to the cytosol. This chain is Ornithine decarboxylase antizyme 1 (OAZ1), found in Homo sapiens (Human).